The primary structure comprises 636 residues: DNA primase (636 aa).

A CHC2-type zinc finger spans residues 44 to 68 (CPFHDEKTPSFHVRPNHGHFHCFGC). The Toprim domain maps to 266–352 (HQAVVVEGYT…SGQSFVAVAA (87 aa)). The Mg(2+) site is built by E272, D323, and D325. Residues 443 to 459 (REEAKGGGRKDNNRRGQ) show a composition bias toward basic and acidic residues. The interval 443–481 (REEAKGGGRKDNNRRGQETAARPKPPPVQRPDPTDPTLW) is disordered.

The protein belongs to the DnaG primase family. In terms of assembly, monomer. Interacts with DnaB. The cofactor is Zn(2+). Mg(2+) serves as cofactor.

It catalyses the reaction ssDNA + n NTP = ssDNA/pppN(pN)n-1 hybrid + (n-1) diphosphate.. RNA polymerase that catalyzes the synthesis of short RNA molecules used as primers for DNA polymerase during DNA replication. This is DNA primase from Mycolicibacterium smegmatis (strain ATCC 700084 / mc(2)155) (Mycobacterium smegmatis).